A 985-amino-acid polypeptide reads, in one-letter code: UPF0182 protein Cgl0786/cg0896 (985 aa).

7 helical membrane-spanning segments follow: residues 19-39, 63-83, 115-135, 176-196, 215-235, 262-282, and 290-310; these read VTWI…SVGF, IVLF…AGYF, VMVI…QRSW, SMML…MGGI, TQLA…YWLD, KIIL…AIFL, and LAVV…PLML. The tract at residues 904–944 is disordered; the sequence is KEAQDIEEVDGTATTPSTDETDTDTDQPATETPTAPVSEAE. Residues 929–939 are compositionally biased toward low complexity; the sequence is DQPATETPTAP.

The protein belongs to the UPF0182 family.

It localises to the cell membrane. This chain is UPF0182 protein Cgl0786/cg0896, found in Corynebacterium glutamicum (strain ATCC 13032 / DSM 20300 / JCM 1318 / BCRC 11384 / CCUG 27702 / LMG 3730 / NBRC 12168 / NCIMB 10025 / NRRL B-2784 / 534).